We begin with the raw amino-acid sequence, 251 residues long: Imidazole glycerol phosphate synthase subunit HisF (251 aa).

Catalysis depends on residues aspartate 11 and aspartate 130.

The protein belongs to the HisA/HisF family. In terms of assembly, heterodimer of HisH and HisF.

The protein resides in the cytoplasm. The catalysed reaction is 5-[(5-phospho-1-deoxy-D-ribulos-1-ylimino)methylamino]-1-(5-phospho-beta-D-ribosyl)imidazole-4-carboxamide + L-glutamine = D-erythro-1-(imidazol-4-yl)glycerol 3-phosphate + 5-amino-1-(5-phospho-beta-D-ribosyl)imidazole-4-carboxamide + L-glutamate + H(+). It participates in amino-acid biosynthesis; L-histidine biosynthesis; L-histidine from 5-phospho-alpha-D-ribose 1-diphosphate: step 5/9. Functionally, IGPS catalyzes the conversion of PRFAR and glutamine to IGP, AICAR and glutamate. The HisF subunit catalyzes the cyclization activity that produces IGP and AICAR from PRFAR using the ammonia provided by the HisH subunit. The protein is Imidazole glycerol phosphate synthase subunit HisF of Chlorobium luteolum (strain DSM 273 / BCRC 81028 / 2530) (Pelodictyon luteolum).